The primary structure comprises 685 residues: Putative mannosyltransferase YycA (685 aa).

A run of 6 helical transmembrane segments spans residues 6–26, 68–88, 109–129, 154–174, 176–196, and 204–224; these read FDAALILILLAAAFLNTYHIW, VLWIQTIFALIFGVHTWSVII, FGVGAARIAALVMALTPIAVA, AVKQGKLVWLLTAFALIGLAF, MKMMQAFMVLPAFVLFYLIAS, and IGSLLLSLVLLTGLSLSWAIA. The segment at 269 to 347 is disordered; that stretch reads MNAAGGGNMQ…GGGGGKSVNM (79 aa). Positions 277–286 are enriched in polar residues; it reads MQNQDNMQAP. The segment covering 287–303 has biased composition (low complexity); the sequence is NGNGSSFSQNGNQSFGN. Gly residues predominate over residues 318–343; the sequence is LNGGGGTPPTGGNGPGNGGPGGGGGK. 7 helical membrane passes run 363 to 383, 399 to 419, 422 to 442, 455 to 475, 479 to 499, 513 to 533, and 573 to 593; these read LSGQISWMLPFSLIGLLGAII, TLFWAAWLVPVAGFFSIAGFF, YYLIMLAPPIAALSGIGWYTM, YLLPAAVLITAVFQVYILSAY, IGSVWMYVLGLLGLGITLALL, IISLCVLLLTPVYWSATPLLY, and TGEEYLFATLTTVTAAPYIIY. Residues 652–685 form a disordered region; the sequence is TSDEYSGSSSSTNSVQGMRRGPGGESQQTLYLVE. A compositionally biased stretch (low complexity) spans 654–665; that stretch reads DEYSGSSSSTNS. Positions 676–685 are enriched in polar residues; it reads ESQQTLYLVE.

This sequence belongs to the glycosyltransferase 39 family.

It localises to the cell membrane. The protein is Putative mannosyltransferase YycA (yycA) of Bacillus subtilis (strain 168).